A 132-amino-acid chain; its full sequence is Long-chain acyl-CoA thioesterase FadM (132 aa).

The active site involves Asp-13.

The protein belongs to the 4-hydroxybenzoyl-CoA thioesterase family. Homotetramer.

The enzyme catalyses (3E,5Z)-tetradecadienoyl-CoA + H2O = (3E,5Z)-tetradecadienoate + CoA + H(+). It carries out the reaction (3E,5Z)-dodecadienoyl-CoA + H2O = (3E,5Z)-dodecadienoate + CoA + H(+). The catalysed reaction is (9Z)-octadecenoyl-CoA + H2O = (9Z)-octadecenoate + CoA + H(+). It catalyses the reaction octadecanoyl-CoA + H2O = octadecanoate + CoA + H(+). The enzyme catalyses hexadecanoyl-CoA + H2O = hexadecanoate + CoA + H(+). It carries out the reaction (3S)-hydroxytetradecanoyl-CoA + H2O = (3S)-hydroxytetradecanoate + CoA + H(+). The catalysed reaction is tetradecanoyl-CoA + H2O = tetradecanoate + CoA + H(+). Long-chain acyl-CoA thioesterase that could be involved in beta-oxidation of fatty acids. Is most active with 3,5-tetradecadienoyl-CoA, a metabolite of oleic acid that is hydrolyzed during oleate beta-oxidation, but can also use other substrates such as 3,5-dodecadienoyl-CoA, 9-cis-octadecenoyl-CoA, octadecanoyl-CoA, hexadecanoyl-CoA, 3-hydroxytetradecanoyl-CoA and tetradecanoyl-CoA. This Escherichia coli (strain K12) protein is Long-chain acyl-CoA thioesterase FadM.